A 521-amino-acid chain; its full sequence is Bifunctional purine biosynthesis protein PurH (521 aa).

Residues 1-147 (MAKITRALIS…KNNADVTVLV (147 aa)) form the MGS-like domain.

Belongs to the PurH family.

The enzyme catalyses (6R)-10-formyltetrahydrofolate + 5-amino-1-(5-phospho-beta-D-ribosyl)imidazole-4-carboxamide = 5-formamido-1-(5-phospho-D-ribosyl)imidazole-4-carboxamide + (6S)-5,6,7,8-tetrahydrofolate. It carries out the reaction IMP + H2O = 5-formamido-1-(5-phospho-D-ribosyl)imidazole-4-carboxamide. Its pathway is purine metabolism; IMP biosynthesis via de novo pathway; 5-formamido-1-(5-phospho-D-ribosyl)imidazole-4-carboxamide from 5-amino-1-(5-phospho-D-ribosyl)imidazole-4-carboxamide (10-formyl THF route): step 1/1. It participates in purine metabolism; IMP biosynthesis via de novo pathway; IMP from 5-formamido-1-(5-phospho-D-ribosyl)imidazole-4-carboxamide: step 1/1. This Geobacter sulfurreducens (strain ATCC 51573 / DSM 12127 / PCA) protein is Bifunctional purine biosynthesis protein PurH.